The following is a 343-amino-acid chain: Holliday junction branch migration complex subunit RuvB (343 aa).

The large ATPase domain (RuvB-L) stretch occupies residues 4-184 (SDRLISAKAG…FGIVQRLEFY (181 aa)). ATP-binding positions include Ile-23, Arg-24, Gly-65, Lys-68, Thr-69, Thr-70, 131–133 (EDY), Arg-174, Tyr-184, and Arg-221. Mg(2+) is bound at residue Thr-69. The tract at residues 185–255 (NHQDLTHIIT…IADQALNMLK (71 aa)) is small ATPAse domain (RuvB-S). Positions 258–343 (SQGFDHMDRR…RSGREDDLFE (86 aa)) are head domain (RuvB-H). DNA-binding residues include Arg-294, Arg-313, and Arg-318.

It belongs to the RuvB family. As to quaternary structure, homohexamer. Forms an RuvA(8)-RuvB(12)-Holliday junction (HJ) complex. HJ DNA is sandwiched between 2 RuvA tetramers; dsDNA enters through RuvA and exits via RuvB. An RuvB hexamer assembles on each DNA strand where it exits the tetramer. Each RuvB hexamer is contacted by two RuvA subunits (via domain III) on 2 adjacent RuvB subunits; this complex drives branch migration. In the full resolvosome a probable DNA-RuvA(4)-RuvB(12)-RuvC(2) complex forms which resolves the HJ.

Its subcellular location is the cytoplasm. It carries out the reaction ATP + H2O = ADP + phosphate + H(+). In terms of biological role, the RuvA-RuvB-RuvC complex processes Holliday junction (HJ) DNA during genetic recombination and DNA repair, while the RuvA-RuvB complex plays an important role in the rescue of blocked DNA replication forks via replication fork reversal (RFR). RuvA specifically binds to HJ cruciform DNA, conferring on it an open structure. The RuvB hexamer acts as an ATP-dependent pump, pulling dsDNA into and through the RuvAB complex. RuvB forms 2 homohexamers on either side of HJ DNA bound by 1 or 2 RuvA tetramers; 4 subunits per hexamer contact DNA at a time. Coordinated motions by a converter formed by DNA-disengaged RuvB subunits stimulates ATP hydrolysis and nucleotide exchange. Immobilization of the converter enables RuvB to convert the ATP-contained energy into a lever motion, pulling 2 nucleotides of DNA out of the RuvA tetramer per ATP hydrolyzed, thus driving DNA branch migration. The RuvB motors rotate together with the DNA substrate, which together with the progressing nucleotide cycle form the mechanistic basis for DNA recombination by continuous HJ branch migration. Branch migration allows RuvC to scan DNA until it finds its consensus sequence, where it cleaves and resolves cruciform DNA. In Marinobacter nauticus (strain ATCC 700491 / DSM 11845 / VT8) (Marinobacter aquaeolei), this protein is Holliday junction branch migration complex subunit RuvB.